A 119-amino-acid polypeptide reads, in one-letter code: Ribonuclease P protein component (119 aa).

Belongs to the RnpA family. As to quaternary structure, consists of a catalytic RNA component (M1 or rnpB) and a protein subunit.

The catalysed reaction is Endonucleolytic cleavage of RNA, removing 5'-extranucleotides from tRNA precursor.. Its function is as follows. RNaseP catalyzes the removal of the 5'-leader sequence from pre-tRNA to produce the mature 5'-terminus. It can also cleave other RNA substrates such as 4.5S RNA. The protein component plays an auxiliary but essential role in vivo by binding to the 5'-leader sequence and broadening the substrate specificity of the ribozyme. The chain is Ribonuclease P protein component from Clostridium acetobutylicum (strain ATCC 824 / DSM 792 / JCM 1419 / IAM 19013 / LMG 5710 / NBRC 13948 / NRRL B-527 / VKM B-1787 / 2291 / W).